A 471-amino-acid polypeptide reads, in one-letter code: 5-hydroxytryptamine receptor 2A (471 aa).

The Extracellular portion of the chain corresponds to 1-80 (MDILCEENTS…LQEKNWSALL (80 aa)). Residues Asn-8, Asn-38, Asn-44, Asn-51, and Asn-54 are each glycosylated (N-linked (GlcNAc...) asparagine). Residues 81 to 97 (TAVVIILTIAGNILVIM) traverse the membrane as a helical segment. Residues 98-111 (AVSLEKKLQNATNY) are Cytoplasmic-facing. Residues 112-137 (FLMSLAIADMLLGFLVMPVSMLTILY) traverse the membrane as a helical segment. Over 138 to 146 (GYRWPLPSK) the chain is Extracellular. A helical membrane pass occupies residues 147–171 (LCAVWIYLDVLFSTASIMHLCAISL). A disulfide bridge links Cys-148 with Cys-227. Asp-155 is a binding site for serotonin. Positions 172 to 174 (DRY) match the DRY motif; important for ligand-induced conformation changes motif. At 172–191 (DRYVAIQNPIHHSRFNSRTK) the chain is on the cytoplasmic side. A helical membrane pass occupies residues 192-215 (AFLKIIAVWTISVGISMPIPVFGL). At 216-232 (QDDSKVFKEGSCLLADD) the chain is on the extracellular side. The helical transmembrane segment at 233–258 (NFVLIGSFVSFFIPLTIMVITYFLTI) threads the bilayer. Over 259-322 (KSLQKEATLC…QSISNEQKAC (64 aa)) the chain is Cytoplasmic. Phosphoserine is present on Ser-280. Residues 323–348 (KVLGIVFFLFVVMWCPFFITNIMAVI) form a helical membrane-spanning segment. Asn-343 is a binding site for serotonin. Cysteines 349 and 353 form a disulfide. Topologically, residues 349 to 356 (CKESCNED) are extracellular. The helical transmembrane segment at 357–382 (VIGALLNVFVWIGYLSSAVNPLVYTL) threads the bilayer. An NPxxY motif; important for ligand-induced conformation changes and signaling motif is present at residues 376-380 (NPLVY). Residues 383–471 (FNKTYRSAFS…DGVNEKVSCV (89 aa)) lie on the Cytoplasmic side of the membrane. Basic and acidic residues predominate over residues 451-465 (QHSEEASKDNSDGVN). The disordered stretch occupies residues 451–471 (QHSEEASKDNSDGVNEKVSCV). The short motif at 469–471 (SCV) is the PDZ-binding element.

This sequence belongs to the G-protein coupled receptor 1 family. In terms of assembly, interacts (via C-terminus) with MPDZ and PATJ. May interact (via C-terminus) with MPP3, PRDX6, DLG4, DLG1, CASK, APBA1 and MAGI2. Interacts with GRM2 and DRD2; this may affect signaling. As to expression, detected in brain cortex (at protein level). Detected in blood platelets.

The protein localises to the cell membrane. It localises to the cell projection. The protein resides in the dendrite. Its subcellular location is the axon. It is found in the cytoplasmic vesicle. The protein localises to the membrane. It localises to the caveola. The protein resides in the presynapse. With respect to regulation, G-protein coupled receptor activity is regulated by lipids: oleamide increases HTR2A-mediated activity. Inhibited by IHCH-7179 small molecule: IHCH-7179 acts both as an agonist activator for HTR1A and as an antagonist inhibitor for HTR2A. In terms of biological role, G-protein coupled receptor for 5-hydroxytryptamine (serotonin). Also functions as a receptor for various drugs and psychoactive substances, including mescaline, psilocybin, 1-(2,5-dimethoxy-4-iodophenyl)-2-aminopropane (DOI) and lysergic acid diethylamide (LSD). Ligand binding causes a conformation change that triggers signaling via guanine nucleotide-binding proteins (G proteins) and modulates the activity of downstream effectors. HTR2A is coupled to G(q)/G(11) G alpha proteins and activates phospholipase C-beta, releasing diacylglycerol (DAG) and inositol 1,4,5-trisphosphate (IP3) second messengers that modulate the activity of phosphatidylinositol 3-kinase and promote the release of Ca(2+) ions from intracellular stores, respectively. Beta-arrestin family members inhibit signaling via G proteins and mediate activation of alternative signaling pathways. Affects neural activity, perception, cognition and mood. Plays a role in the regulation of behavior, including responses to anxiogenic situations and psychoactive substances. Plays a role in intestinal smooth muscle contraction, and may play a role in arterial vasoconstriction. Functionally, (Microbial infection) Acts as a receptor for human JC polyomavirus/JCPyV. The sequence is that of 5-hydroxytryptamine receptor 2A from Homo sapiens (Human).